Here is a 245-residue protein sequence, read N- to C-terminus: METSQGWLVACVLTMTLVWTVAEDVCRAPNGKDGAPGNPGRPGRPGLKGERGEPGAAGIRTGIRGFKGDPGESGPPGKPGNVGLPGPSGPLGDSGPQGLKGVKGNPGNIRDQPRPAFSAIRQNPMTLGNVVIFDKVLTNQESPYQNHTGRFICAVPGFYYFNFQVISKWDLCLFIKSSSGGQPRDSLSFSNTNNKGLFQVLAGGTVLQLRRGDEVWIEKDPAKGRIYQGTEADSIFSGFLIFPSA.

An N-terminal signal peptide occupies residues 1–22; sequence METSQGWLVACVLTMTLVWTVA. The segment at 28–114 is disordered; it reads APNGKDGAPG…NPGNIRDQPR (87 aa). In terms of domain architecture, Collagen-like spans 31–109; the sequence is GKDGAPGNPG…KGVKGNPGNI (79 aa). 4-hydroxyproline occurs at positions 39 and 45. Position 48 is a 5-hydroxylysine (K48). O-linked (Gal...) hydroxylysine; alternate glycosylation is present at K48. A 4-hydroxyproline modification is found at P54. 5-hydroxylysine is present on K67. K67 carries an O-linked (Gal...) hydroxylysine; alternate glycan. P79 and P85 each carry 4-hydroxyproline. Low complexity predominate over residues 79 to 99; the sequence is PGNVGLPGPSGPLGDSGPQGL. Position 100 is a 5-hydroxylysine (K100). Residue K100 is glycosylated (O-linked (Gal...) hydroxylysine; alternate). The C1q domain occupies 110–245; sequence RDQPRPAFSA…FSGFLIFPSA (136 aa). N146 carries an N-linked (GlcNAc...) asparagine glycan. Q199 provides a ligand contact to Ca(2+).

Core component of the complement C1 complex, a calcium-dependent complex composed of 1 molecule of the C1Q subcomplex, 2 molecules of C1R and 2 molecules of C1S. The C1Q subcomplex is composed 18 subunits: 3 chains of C1QA, C1QB, and C1QC trimerize to form 6 collagen-like triple helices connected to six globular ligand-recognition modules (C1q domain). Interacts with CR1 (via Sushi 24 and Sushi 25 domains). Interacts (via C-terminus) with CD33; this interaction activates CD33 inhibitory motifs. In terms of processing, O-linked glycans are assumed to be the Glc-Gal disaccharides typically found as secondary modifications of hydroxylated lysines in collagen-like domains.

The protein resides in the secreted. The protein localises to the cell surface. The C1Q subcomplex is inhibited by sulfated molecules, such as triterpenoid sulfates, heparan sulfate, or chondroitin sulfates. In terms of biological role, core component of the complement C1 complex, a multiprotein complex that initiates the classical pathway of the complement system, a cascade of proteins that leads to phagocytosis and breakdown of pathogens and signaling that strengthens the adaptive immune system. The classical complement pathway is initiated by the C1Q subcomplex of the C1 complex, which specifically binds IgG or IgM immunoglobulins complexed with antigens, forming antigen-antibody complexes on the surface of pathogens: C1QA, together with C1QB and C1QC, specifically recognizes and binds the Fc regions of IgG or IgM via its C1q domain. Immunoglobulin-binding activates the proenzyme C1R, which cleaves C1S, initiating the proteolytic cascade of the complement system. The C1Q subcomplex is activated by a hexamer of IgG complexed with antigens, while it is activated by a pentameric IgM. The C1Q subcomplex also recognizes and binds phosphatidylserine exposed on the surface of cells undergoing programmed cell death, possibly promoting activation of the complement system. The chain is Complement C1q subcomponent subunit A from Mus musculus (Mouse).